The following is a 309-amino-acid chain: Zinc transporter ZIPB (309 aa).

The Periplasmic portion of the chain corresponds to 1–22 (MNQPSSLAADLRGAWHAQAQSH). Residues 23 to 50 (PLITLGLAASAAGVVLLLVAGIVNALTG) form a helical membrane-spanning segment. The Extracellular portion of the chain corresponds to 51 to 55 (ENRVH). Residues 56 to 81 (VGYAVLGGAAGFAATALGALMALGLR) traverse the membrane as a helical segment. Residues 82-83 (AI) are Periplasmic-facing. A helical membrane pass occupies residues 84–119 (SARTQDAMLGFAAGMMLAASAFSLILPGLDAAGTIV). Aspartate 89 contributes to the Zn(2+) binding site. A Cd(2+)-binding site is contributed by methionine 99. Residues 120-121 (GP) are Extracellular-facing. A helical membrane pass occupies residues 122–145 (GPAAAAVVALGLGLGVLLMLGLDY). Aspartate 144 serves as a coordination point for Zn(2+). Cd(2+) is bound at residue aspartate 144. Topologically, residues 146 to 165 (FTPHEHERTGHQGPEAARVN) are periplasmic. Residues 166–190 (RVWLFVLTIILHNLPEGMAIGVSFA) traverse the membrane as a helical segment. A Zn(2+)-binding site is contributed by histidine 177. Cd(2+) contacts are provided by histidine 177, asparagine 178, and glutamate 181. Residue glutamate 181 coordinates Zn(2+). Residues 191-192 (TG) are Extracellular-facing. Residues 193–222 (DLRIGLPLTSAIAIQDVPEGLAVALALRAV) form a helical membrane-spanning segment. Glutamine 207 is a binding site for Zn(2+). Cd(2+) contacts are provided by glutamine 207, aspartate 208, and glutamate 211. Glutamate 211 lines the Zn(2+) pocket. Residues 223–224 (GL) are Periplasmic-facing. A helical transmembrane segment spans residues 225–251 (PIGRAVLVAVASGLMEPLGALVGVGIS). Glutamate 240 is a Cd(2+) binding site. The Extracellular segment spans residues 252 to 255 (SGFA). Residues 256 to 275 (LAYPISMGLAAGAMIFVVSH) form a helical membrane-spanning segment. Positions 275, 276, and 286 each coordinate Zn(2+). Residue histidine 275 participates in Cd(2+) binding. The Periplasmic segment spans residues 276–287 (EVIPETHRNGHE). A helical membrane pass occupies residues 288-308 (TTATVGLMAGFALMMFLDTAL). Position 309 (glycine 309) is a topological domain, extracellular.

The protein belongs to the ZIP transporter (TC 2.A.5) family. As to quaternary structure, homodimer. Also exists as a monomer.

Its subcellular location is the cell inner membrane. The catalysed reaction is Zn(2+)(in) = Zn(2+)(out). It catalyses the reaction Cd(2+)(in) = Cd(2+)(out). Functionally, selective electrodiffusional channel that mediates the uptake of Zn(2+). Exploits in vivo zinc concentration gradients (maintained by cellular zinc homeostasis) to passively move zinc ions into the cytoplasm. ZIPB-mediated zinc flux is dependent upon pH, but independent of the proton motive force. Is also able to import Cd(2+), but is not permeable to Co(2+), Cu(2+), Fe(2+), Mn(2+) and Ni(2+). In Bordetella bronchiseptica (strain ATCC BAA-588 / NCTC 13252 / RB50) (Alcaligenes bronchisepticus), this protein is Zinc transporter ZIPB.